Here is a 90-residue protein sequence, read N- to C-terminus: Small ribosomal subunit protein uS17 (90 aa).

It belongs to the universal ribosomal protein uS17 family. As to quaternary structure, part of the 30S ribosomal subunit.

Functionally, one of the primary rRNA binding proteins, it binds specifically to the 5'-end of 16S ribosomal RNA. The chain is Small ribosomal subunit protein uS17 from Paraburkholderia phymatum (strain DSM 17167 / CIP 108236 / LMG 21445 / STM815) (Burkholderia phymatum).